Here is a 317-residue protein sequence, read N- to C-terminus: DNA-3-methyladenine glycosylase (317 aa).

Positions 1-76 (SKEPVSVVLP…KEKLSSTPGL (76 aa)) are disordered. The segment covering 53–64 (KKQQLAQSEQQQ) has biased composition (low complexity). A phosphoserine mark is found at serine 84 and serine 258.

The protein belongs to the DNA glycosylase MPG family. As to quaternary structure, binds MBD1. Binds SSBP1.

It is found in the cytoplasm. The protein resides in the mitochondrion matrix. The protein localises to the mitochondrion nucleoid. It localises to the nucleus. It carries out the reaction Hydrolysis of alkylated DNA, releasing 3-methyladenine, 3-methylguanine, 7-methylguanine and 7-methyladenine.. Binding to SSBP1 in mitochondria inhibits glycosylase activity in the context of a single-stranded DNA (ssDNA), but not a double-stranded DNA (dsDNA) substrates. Its function is as follows. Hydrolysis of the deoxyribose N-glycosidic bond to excise 3-methyladenine, and 7-methylguanine from the damaged DNA polymer formed by alkylation lesions. The chain is DNA-3-methyladenine glycosylase (Mpg) from Rattus norvegicus (Rat).